Here is an 84-residue protein sequence, read N- to C-terminus: CDC42 small effector protein 2 (84 aa).

S-palmitoyl cysteine attachment occurs at residues C10 and C11. In terms of domain architecture, CRIB spans 29–42; it reads IGEPTNFVHTAHVG. 2 positions are modified to phosphoserine: S43 and S52.

Belongs to the CDC42SE/SPEC family. Interacts with CDC42 (in GTP-bound form). Interacts weakly with RAC1 and not at all with RHOA.

It localises to the cytoplasm. It is found in the cytoskeleton. The protein resides in the cell membrane. The protein localises to the cell projection. Its subcellular location is the phagocytic cup. Its function is as follows. Probably involved in the organization of the actin cytoskeleton by acting downstream of CDC42, inducing actin filament assembly. Alters CDC42-induced cell shape changes. In activated T-cells, may play a role in CDC42-mediated F-actin accumulation at the immunological synapse. May play a role in early contractile events in phagocytosis in macrophages. The sequence is that of CDC42 small effector protein 2 (CDC42SE2) from Bos taurus (Bovine).